Reading from the N-terminus, the 517-residue chain is Cytochrome b mRNA maturase bI3 (517 aa).

Residues 1 to 31 (MAFRKSNVYLSLVNSYIIDSPQPSSINYWWN) lie on the Mitochondrial matrix side of the membrane. The segment at 1–169 (MAFRKSNVYL…DIVSWLWGGF (169 aa)) is cytochrome b. The chain crosses the membrane as a helical span at residues 32 to 52 (MGSLLGLCLVIQIVTGIFMAM). Topologically, residues 53–84 (HYSSNIELAFSSVEHIMRDVHNGYILRYLHAN) are mitochondrial intermembrane. The helical transmembrane segment at 85–105 (GASFFFMVMFMHMAKGLYYGS) threads the bilayer. Topologically, residues 106–115 (YRSPRVTLWN) are mitochondrial matrix. Residues 116–136 (VGVIIFILTIATAFLGYCCVY) traverse the membrane as a helical segment. Over 137–145 (GQMSHWGAT) the chain is Mitochondrial intermembrane. A helical membrane pass occupies residues 146 to 166 (VITNLFSAIPFVGNDIVSWLW). Over 167–184 (GGFNMEDPYYSNMMLNKS) the chain is Mitochondrial matrix. The tract at residues 170–517 (NMEDPYYSNM…NNYFKIPPKY (348 aa)) is maturase. A helical transmembrane segment spans residues 185 to 205 (VLCWNIFIWMMNYYIIQLIIY). The Mitochondrial intermembrane portion of the chain corresponds to 206–224 (NNMIWNKNNMVKMFIMRRK). The chain crosses the membrane as a helical span at residues 225–242 (LAVINMYMYMKLIIQRTY). The Mitochondrial matrix portion of the chain corresponds to 243–517 (SYYMNNTIIY…NNYFKIPPKY (275 aa)).

In the N-terminal section; belongs to the cytochrome b family. This sequence in the C-terminal section; belongs to the LAGLIDADG endonuclease family. Forms a ribonucleoprotein complex composed of maturase bI3 and 2 dimers of MRS1 that assemble around the bI3 RNA.

The protein resides in the mitochondrion inner membrane. Mitochondrial mRNA maturase required for splicing of intron 3 of the cytochrome b (COB) gene, containing its own coding sequence. In vivo splicing requires the formation of a ribonucleoprotein complex together with the imported mitochondrial RNA-splicing protein MRS1. The complex seems to stimulate the intrinsic ribozyme activity of intron bI3 through binding to and stabilizing specific secondary and tertiary structure elements in the RNA. The polypeptide is Cytochrome b mRNA maturase bI3 (BI3) (Saccharomyces cerevisiae (strain ATCC 204508 / S288c) (Baker's yeast)).